The primary structure comprises 362 residues: sn-glycerol-3-phosphate import ATP-binding protein UgpC (362 aa).

The 232-residue stretch at 4–235 (LSFRNVKKTY…PASTFVAGFI (232 aa)) folds into the ABC transporter domain. 37-44 (GPSGCGKS) serves as a coordination point for ATP.

Belongs to the ABC transporter superfamily. sn-glycerol-3-phosphate importer (TC 3.A.1.1.3) family. In terms of assembly, the complex is composed of two ATP-binding proteins (UgpC), two transmembrane proteins (UgpA and UgpE) and a solute-binding protein (UgpB).

The protein localises to the cell inner membrane. The catalysed reaction is sn-glycerol 3-phosphate(out) + ATP + H2O = sn-glycerol 3-phosphate(in) + ADP + phosphate + H(+). Functionally, part of the ABC transporter complex UgpBAEC involved in sn-glycerol-3-phosphate (G3P) import. Responsible for energy coupling to the transport system. This chain is sn-glycerol-3-phosphate import ATP-binding protein UgpC, found in Bordetella bronchiseptica (strain ATCC BAA-588 / NCTC 13252 / RB50) (Alcaligenes bronchisepticus).